Reading from the N-terminus, the 663-residue chain is 4-hydroxy-3-methylbut-2-en-1-yl diphosphate synthase (flavodoxin) (663 aa).

Residues cysteine 568, cysteine 571, cysteine 602, and glutamate 609 each coordinate [4Fe-4S] cluster.

Belongs to the IspG family. [4Fe-4S] cluster serves as cofactor.

The catalysed reaction is (2E)-4-hydroxy-3-methylbut-2-enyl diphosphate + oxidized [flavodoxin] + H2O + 2 H(+) = 2-C-methyl-D-erythritol 2,4-cyclic diphosphate + reduced [flavodoxin]. The protein operates within isoprenoid biosynthesis; isopentenyl diphosphate biosynthesis via DXP pathway; isopentenyl diphosphate from 1-deoxy-D-xylulose 5-phosphate: step 5/6. Its function is as follows. Converts 2C-methyl-D-erythritol 2,4-cyclodiphosphate (ME-2,4cPP) into 1-hydroxy-2-methyl-2-(E)-butenyl 4-diphosphate. The chain is 4-hydroxy-3-methylbut-2-en-1-yl diphosphate synthase (flavodoxin) from Leptospira borgpetersenii serovar Hardjo-bovis (strain L550).